A 404-amino-acid polypeptide reads, in one-letter code: METTQTLRFKTKALAVLSKCYDHAQTHLKGGVLQVNLLSVNYGGPRLAAVANAGTAGLISFEVSPDAVAEWQNHQSPEEAPAAVSFRNLAYGRTCVLGKELFGSAVEQASLQFYKRPQGGSRPEFVKLTMEYDDKVSKSHHTCALMPYMPPASDRLRNEQMIGQVLLMPKTASSLQKWARQQGSGGVKVTLNPDLYVTTYTSGEACLTLDYKPLSVGPYEAFTGPVAKAQDVGAVEAHVVCSVAADSLAAALSLCRIPAVSVPILRFYRSGIIAVVAGLLTSAGDLPLDLSVILFNHASEEAAASTASEPEDKSPRVQPLGTGLQQRPRHTVSPSPSPPPPPRTPTWESPARPETPSPAIPSHSSNTALERPLAVQLARKRTSSEARQKQKHPKKVKQAFNPLI.

Residues 1–300 (METTQTLRFK…SVILFNHASE (300 aa)) are homodimerization; DNA binding and DNA polymerase processivity. Positions 301-404 (EAAASTASEP…KVKQAFNPLI (104 aa)) are transcriptional activation. A disordered region spans residues 302 to 404 (AAASTASEPE…KVKQAFNPLI (103 aa)). Over residues 335–344 (SPSPPPPPRT) the composition is skewed to pro residues. A Phosphoserine modification is found at Ser-337. Thr-344 carries the post-translational modification Phosphothreonine. Ser-349 carries the post-translational modification Phosphoserine. Thr-355 carries the phosphothreonine modification.

The protein belongs to the herpesviridae DNA polymerase accessory subunit family. In terms of assembly, homodimer. Two dimers can adopt a tetrameric ring-like structure. Forms a complex with the DNA-binding protein BALF2, the DNA polymerase subunit BALF5, and the alkaline exonuclease BGLF5. Interacts (via N-terminus) with BZLF1 (via bZIP domain); this interaction may inhibit BZLF1-induced transcription of the BMRF1 promoter. Interacts (via C-terminus) with host NuRD complex; this interaction is important for transcriptional activation of EBV promoters and inhibition of the ubiquitination step of DDR signaling. Post-translationally, phosphorylated by the viral BGLF4 kinase.

Its subcellular location is the virion tegument. The protein localises to the host nucleus. Its function is as follows. Acts as a DNA polymerase processivity factor; a transcriptional activator for several EBV promoters and inhibits the host DNA damage response (DDR) to double-stranded DNA breaks. Plays an essential role in the viral lytic DNA replication by acting as a polymerase accessory subunit. Stimulates the viral DNA polymerase activity and appears to function with it as a holoenzyme. Increases the processivity of the viral polymerase, probably by acting as a sliding clamp that prevents dissociation of the polymerase from the active template. In addition, BMRF1 transcriptionally activates the oriLyt early BHLF1 promoter. Promotes G1/S cell cycle arrest through p53 induction. This is DNA polymerase processivity factor BMRF1 from Epstein-Barr virus (strain AG876) (HHV-4).